Here is a 256-residue protein sequence, read N- to C-terminus: Hydroxyacylglutathione hydrolase (256 aa).

7 residues coordinate Zn(2+): histidine 53, histidine 55, aspartate 57, histidine 58, histidine 113, aspartate 130, and histidine 168.

The protein belongs to the metallo-beta-lactamase superfamily. Glyoxalase II family. In terms of assembly, monomer. Zn(2+) is required as a cofactor.

It carries out the reaction an S-(2-hydroxyacyl)glutathione + H2O = a 2-hydroxy carboxylate + glutathione + H(+). Its pathway is secondary metabolite metabolism; methylglyoxal degradation; (R)-lactate from methylglyoxal: step 2/2. Its function is as follows. Thiolesterase that catalyzes the hydrolysis of S-D-lactoyl-glutathione to form glutathione and D-lactic acid. In Tolumonas auensis (strain DSM 9187 / NBRC 110442 / TA 4), this protein is Hydroxyacylglutathione hydrolase.